Here is a 267-residue protein sequence, read N- to C-terminus: Apolipoprotein A-I (267 aa).

Residues 1 to 18 (MKAAVLTLAVLFLTGSQA) form the signal peptide. A run of 2 repeats spans residues 68–89 (LKLL…EQLG) and 90–111 (PVTQ…QEMS). The 10 X approximate tandem repeats stretch occupies residues 68-267 (LKLLDNWDSM…EEYTKKLNTQ (200 aa)). At Met110 the chain carries Methionine sulfoxide. Residues 112–122 (KDLEEVKAKVQ) form a 3; half-length repeat. A run of 5 repeats spans residues 123 to 144 (PYLD…QKVE), 145 to 166 (PLRA…EKLS), 167 to 188 (PLGE…THLA), 189 to 210 (PYTD…ENGG), and 211 to 232 (ARLA…EKAK). Met136 bears the Methionine sulfoxide mark. Residues 233–243 (PALEDLRQGLL) form a 9; half-length repeat. Repeat 10 spans residues 244–267 (PVLESFKVSFLSALEEYTKKLNTQ).

Belongs to the apolipoprotein A1/A4/E family. Homodimer. Interacts with APOA1BP and CLU. Component of a sperm activating protein complex (SPAP), consisting of APOA1, an immunoglobulin heavy chain, an immunoglobulin light chain and albumin. Interacts with NDRG1. Interacts with SCGB3A2. Interacts with NAXE and YJEFN3. In terms of processing, glycosylated. Palmitoylated. As to expression, major protein of plasma HDL, also found in chylomicrons.

It is found in the secreted. Its function is as follows. Participates in the reverse transport of cholesterol from tissues to the liver for excretion by promoting cholesterol efflux from tissues and by acting as a cofactor for the lecithin cholesterol acyltransferase (LCAT). As part of the SPAP complex, activates spermatozoa motility. The sequence is that of Apolipoprotein A-I (APOA1) from Pongo abelii (Sumatran orangutan).